The primary structure comprises 39 residues: Photosystem II reaction center protein J (39 aa).

The chain crosses the membrane as a helical span at residues 7–27 (IPLWLVATIAGLGVIAVLGLF).

The protein belongs to the PsbJ family. As to quaternary structure, PSII is composed of 1 copy each of membrane proteins PsbA, PsbB, PsbC, PsbD, PsbE, PsbF, PsbH, PsbI, PsbJ, PsbK, PsbL, PsbM, PsbT, PsbX, PsbY, PsbZ, Psb30/Ycf12, peripheral proteins PsbO, CyanoQ (PsbQ), PsbU, PsbV and a large number of cofactors. It forms dimeric complexes.

It is found in the cellular thylakoid membrane. Its function is as follows. One of the components of the core complex of photosystem II (PSII). PSII is a light-driven water:plastoquinone oxidoreductase that uses light energy to abstract electrons from H(2)O, generating O(2) and a proton gradient subsequently used for ATP formation. It consists of a core antenna complex that captures photons, and an electron transfer chain that converts photonic excitation into a charge separation. The sequence is that of Photosystem II reaction center protein J from Microcystis aeruginosa (strain NIES-843 / IAM M-2473).